The primary structure comprises 269 residues: Type II methyltransferase M2.LlaDCHI (269 aa).

The protein belongs to the N(4)/N(6)-methyltransferase family.

The enzyme catalyses a 2'-deoxyadenosine in DNA + S-adenosyl-L-methionine = an N(6)-methyl-2'-deoxyadenosine in DNA + S-adenosyl-L-homocysteine + H(+). Its function is as follows. A beta subtype methylase, recognizes the double-stranded sequence 5'-GATC-3', methylates A-2 on both strands, and protects the DNA from cleavage by the LlaDCHI endonuclease. The chain is Type II methyltransferase M2.LlaDCHI from Lactococcus lactis subsp. cremoris (Streptococcus cremoris).